Here is a 336-residue protein sequence, read N- to C-terminus: Inositol 2-dehydrogenase (336 aa).

This sequence belongs to the Gfo/Idh/MocA family. Homotetramer.

The catalysed reaction is myo-inositol + NAD(+) = scyllo-inosose + NADH + H(+). In terms of biological role, involved in the oxidation of myo-inositol (MI) to 2-keto-myo-inositol (2KMI or 2-inosose). In Acidiphilium cryptum (strain JF-5), this protein is Inositol 2-dehydrogenase.